Consider the following 248-residue polypeptide: MGRGRVELKRIENKINRQVTFAKRRNGLLKKAYELSVLCDAEVALIIFSNRGKLYEFCSGQSMTRTLERYQKFSYGGPDTAIQNKENELVQSSRNEYLKLKARVENLQRTQRNLLGEDLGTLGIKELEQLEKQLDSSLRHIRSTRTQHMLDQLTDLQRREQMLCEANKCLRRKLEESNQLHGQVWEHGATLLGYERQSPHAVQQVPPHGGNGFFHSLEAAAEPTLQIGFTPEQMNNSCVTAFMPTWLP.

The 61-residue stretch at 1 to 61 (MGRGRVELKR…GKLYEFCSGQ (61 aa)) folds into the MADS-box domain. The 91-residue stretch at 90–180 (VQSSRNEYLK…RRKLEESNQL (91 aa)) folds into the K-box domain.

As to quaternary structure, may interact with the K-box of MADS6 and MADS16. May interact with MADS13 and MADS18. Binds to FCA. Expressed in lodicules, stamens and carpels.

The protein localises to the nucleus. Its function is as follows. Probable transcription factor. May be involved in the control of flowering time. This Oryza sativa subsp. japonica (Rice) protein is MADS-box transcription factor 8 (MADS8).